A 421-amino-acid polypeptide reads, in one-letter code: 4-hydroxy-3-methylbut-2-en-1-yl diphosphate synthase (flavodoxin) (421 aa).

Residues Cys-311, Cys-314, Cys-357, and Glu-364 each contribute to the [4Fe-4S] cluster site.

It belongs to the IspG family. [4Fe-4S] cluster is required as a cofactor.

The catalysed reaction is (2E)-4-hydroxy-3-methylbut-2-enyl diphosphate + oxidized [flavodoxin] + H2O + 2 H(+) = 2-C-methyl-D-erythritol 2,4-cyclic diphosphate + reduced [flavodoxin]. It participates in isoprenoid biosynthesis; isopentenyl diphosphate biosynthesis via DXP pathway; isopentenyl diphosphate from 1-deoxy-D-xylulose 5-phosphate: step 5/6. Functionally, converts 2C-methyl-D-erythritol 2,4-cyclodiphosphate (ME-2,4cPP) into 1-hydroxy-2-methyl-2-(E)-butenyl 4-diphosphate. The chain is 4-hydroxy-3-methylbut-2-en-1-yl diphosphate synthase (flavodoxin) from Xanthomonas euvesicatoria pv. vesicatoria (strain 85-10) (Xanthomonas campestris pv. vesicatoria).